The sequence spans 66 residues: Large ribosomal subunit protein bL35 (66 aa).

Residues 1–46 (MPKMKTHRASAKRFKRTGNGGLKRHHAFTGHRFHGKTKKQRRHLRK) show a composition bias toward basic residues. Residues 1-50 (MPKMKTHRASAKRFKRTGNGGLKRHHAFTGHRFHGKTKKQRRHLRKAAMV) are disordered.

The protein belongs to the bacterial ribosomal protein bL35 family.

The chain is Large ribosomal subunit protein bL35 from Lactobacillus delbrueckii subsp. bulgaricus (strain ATCC 11842 / DSM 20081 / BCRC 10696 / JCM 1002 / NBRC 13953 / NCIMB 11778 / NCTC 12712 / WDCM 00102 / Lb 14).